Consider the following 233-residue polypeptide: 2-C-methyl-D-erythritol 4-phosphate cytidylyltransferase (233 aa).

It belongs to the IspD/TarI cytidylyltransferase family. IspD subfamily.

It catalyses the reaction 2-C-methyl-D-erythritol 4-phosphate + CTP + H(+) = 4-CDP-2-C-methyl-D-erythritol + diphosphate. Its pathway is isoprenoid biosynthesis; isopentenyl diphosphate biosynthesis via DXP pathway; isopentenyl diphosphate from 1-deoxy-D-xylulose 5-phosphate: step 2/6. Catalyzes the formation of 4-diphosphocytidyl-2-C-methyl-D-erythritol from CTP and 2-C-methyl-D-erythritol 4-phosphate (MEP). This is 2-C-methyl-D-erythritol 4-phosphate cytidylyltransferase from Syntrophotalea carbinolica (strain DSM 2380 / NBRC 103641 / GraBd1) (Pelobacter carbinolicus).